The sequence spans 388 residues: Myosin light chain kinase family member 4 (388 aa).

A Protein kinase domain is found at 106 to 361 (VSKTEILGGG…ASEALKHPWL (256 aa)). ATP contacts are provided by residues 112–120 (LGGGRFGQV) and Lys135. The active-site Proton acceptor is Asp227.

This sequence belongs to the protein kinase superfamily. CAMK Ser/Thr protein kinase family.

The catalysed reaction is L-seryl-[protein] + ATP = O-phospho-L-seryl-[protein] + ADP + H(+). It catalyses the reaction L-threonyl-[protein] + ATP = O-phospho-L-threonyl-[protein] + ADP + H(+). In Homo sapiens (Human), this protein is Myosin light chain kinase family member 4 (MYLK4).